Here is a 215-residue protein sequence, read N- to C-terminus: Ras-related protein Rab-14 (215 aa).

The residue at position 2 (alanine 2) is an N-acetylalanine. GTP is bound by residues glycine 21, valine 22, glycine 23, lysine 24, serine 25, cysteine 26, alanine 38, aspartate 39, cysteine 40, histidine 42, and threonine 43. Mg(2+) is bound at residue serine 25. The Switch 1 signature appears at 42 to 47 (HTIGVE). Positions 43 and 66 each coordinate Mg(2+). The short motif at 68 to 77 (AGQERFRAVT) is the Switch 2 element. GTP-binding residues include glycine 69, asparagine 124, lysine 125, aspartate 127, alanine 155, and lysine 156. Residues 188–215 (SGVQHKPSAPQGGRLTSEPQPQREGCGC) are disordered. 2 S-geranylgeranyl cysteine lipidation sites follow: cysteine 213 and cysteine 215. Cysteine 215 carries the post-translational modification Cysteine methyl ester.

It belongs to the small GTPase superfamily. Rab family. Interacts with ZFYVE20. Interacts with KIF16B. Interacts (GTP-bound form) with RUFY1; the interaction recruits RUFY1 onto endosomal membranes. Interacts (GTP-bound form) with RAB11FIP1 (via its C-terminus); the interactions doesn't mediate RAB11FIP1 rectruitment to membranes. Interacts with RAB11FIP2. It depends on Mg(2+) as a cofactor.

It is found in the recycling endosome. The protein localises to the early endosome membrane. The protein resides in the golgi apparatus membrane. Its subcellular location is the golgi apparatus. It localises to the trans-Golgi network membrane. It is found in the cytoplasmic vesicle. The protein localises to the phagosome. The catalysed reaction is GTP + H2O = GDP + phosphate + H(+). With respect to regulation, regulated by guanine nucleotide exchange factors (GEFs) including DENND6A and DENND6B which promote the exchange of bound GDP for free GTP. Regulated by GTPase activating proteins (GAPs) which increase the GTP hydrolysis activity. Inhibited by GDP dissociation inhibitors (GDIs) which prevent Rab-GDP dissociation. Its function is as follows. The small GTPases Rab are key regulators of intracellular membrane trafficking, from the formation of transport vesicles to their fusion with membranes. Rabs cycle between an inactive GDP-bound form and an active GTP-bound form that is able to recruit to membranes different set of downstream effectors directly responsible for vesicle formation, movement, tethering and fusion. Involved in membrane trafficking between the Golgi complex and endosomes during early embryonic development. Regulates the Golgi to endosome transport of FGFR-containing vesicles during early development, a key process for developing basement membrane and epiblast and primitive endoderm lineages during early postimplantation development. May act by modulating the kinesin KIF16B-cargo association to endosomes. Regulates, together with its guanine nucleotide exchange factor DENND6A, the specific endocytic transport of ADAM10, N-cadherin/CDH2 shedding and cell-cell adhesion. Mediates endosomal tethering and fusion through the interaction with RUFY1 and RAB4B. Interaction with RAB11FIP1 may function in the process of neurite formation. The polypeptide is Ras-related protein Rab-14 (RAB14) (Sus scrofa (Pig)).